The primary structure comprises 57 residues: Large ribosomal subunit protein bL32 (57 aa).

Positions 1–22 are disordered; sequence MAVPKKKTSKSKRDKRRATWRH.

The protein belongs to the bacterial ribosomal protein bL32 family.

This Nostoc punctiforme (strain ATCC 29133 / PCC 73102) protein is Large ribosomal subunit protein bL32.